Here is a 548-residue protein sequence, read N- to C-terminus: Zinc metalloproteinase dpy-31 (548 aa).

The first 24 residues, 1 to 24, serve as a signal peptide directing secretion; the sequence is MSLLRSASLLLVVVTAALPPCTLG. The propeptide occupies 25–150; that stretch reads YSLHDGSRLD…KTGQRRVKRK (126 aa). The Peptidase M12A domain occupies 150-349; it reads KFIGSDLRRW…IRLMNKIYCS (200 aa). N-linked (GlcNAc...) asparagine glycosylation is present at asparagine 190. 5 cysteine pairs are disulfide-bonded: cysteine 193/cysteine 348, cysteine 216/cysteine 237, cysteine 352/cysteine 372, cysteine 374/cysteine 383, and cysteine 394/cysteine 422. Histidine 245 is a Zn(2+) binding site. Residue glutamate 246 is part of the active site. Zn(2+) contacts are provided by histidine 249 and histidine 255. An EGF-like domain is found at 344–384; it reads NKIYCSNVCSRKLPCQRGGYTDPRRCDRCRCPDGFTGQFCE. Residues 394–510 form the CUB domain; sequence CGGRIQVNSG…RGFEARARAL (117 aa). Asparagine 461 carries an N-linked (GlcNAc...) asparagine glycan. Residues 513 to 547 form the TSP type-1 domain; it reads NGQWASWTPWTPCTASCGACGSRMRTRVCPHGACP. 3 disulfides stabilise this stretch: cysteine 525/cysteine 546, cysteine 529/cysteine 546, and cysteine 541/cysteine 546.

Zn(2+) serves as cofactor.

It is found in the secreted. In terms of biological role, metalloprotease which cleaves the carboxyl terminus of procollagens to mature collagens. Probably involved in cuticular collagen maturation. This is Zinc metalloproteinase dpy-31 from Haemonchus contortus (Barber pole worm).